Reading from the N-terminus, the 327-residue chain is Glycerol-3-phosphate dehydrogenase [NAD(P)+] (327 aa).

Positions 16, 36, and 108 each coordinate NADPH. Sn-glycerol 3-phosphate contacts are provided by Lys108, Gly136, and Ser138. Residue Ala140 coordinates NADPH. Residues Lys191, Asp244, Ser254, Arg255, and Asn256 each coordinate sn-glycerol 3-phosphate. Lys191 (proton acceptor) is an active-site residue. Position 255 (Arg255) interacts with NADPH. NADPH contacts are provided by Leu274 and Glu276.

Belongs to the NAD-dependent glycerol-3-phosphate dehydrogenase family.

The protein resides in the cytoplasm. It catalyses the reaction sn-glycerol 3-phosphate + NAD(+) = dihydroxyacetone phosphate + NADH + H(+). The enzyme catalyses sn-glycerol 3-phosphate + NADP(+) = dihydroxyacetone phosphate + NADPH + H(+). Its pathway is membrane lipid metabolism; glycerophospholipid metabolism. Its function is as follows. Catalyzes the reduction of the glycolytic intermediate dihydroxyacetone phosphate (DHAP) to sn-glycerol 3-phosphate (G3P), the key precursor for phospholipid synthesis. In Bradyrhizobium sp. (strain ORS 278), this protein is Glycerol-3-phosphate dehydrogenase [NAD(P)+].